A 130-amino-acid polypeptide reads, in one-letter code: Profilin-1 (130 aa).

The protein belongs to the profilin family. Interacts with actin. Interacts with RHO1 (GTP-bound form).

It is found in the cytoplasm. The protein resides in the cytoskeleton. The protein localises to the cell projection. It localises to the phagocytic cup. Its subcellular location is the cytoplasmic vesicle. It is found in the phagosome. Functionally, binds to actin and affects the structure of the cytoskeleton. At high concentrations, profilin prevents the polymerization of actin, whereas it enhances it at low concentrations. By binding to PIP2, it inhibits the formation of IP3 and DG. This is Profilin-1 from Entamoeba histolytica (strain ATCC 30459 / HM-1:IMSS / ABRM).